We begin with the raw amino-acid sequence, 314 residues long: NAC domain-containing protein 10 (314 aa).

The span at 18–39 (VSNTDHPSVQLKDQSQSCVTSR) shows a compositional bias: polar residues. Disordered stretches follow at residues 18-48 (VSNT…SAET) and 150-182 (YTTG…PVLS). The 160-residue stretch at 77–236 (LPAGVKFDPS…EPVLSKVFYQ (160 aa)) folds into the NAC domain. Positions 160-171 (VSTDEEGHETRW) are enriched in basic and acidic residues. Residues 187–242 (TGFKKILVLYTNYGRQKKPEKTNWVMHQYHLGSSEDEKDGEPVLSKVFYQTQPRQC) mediate DNA binding.

Expressed in protoxylem and elongating interfascicular fiber cells of elongating internodes, developing metaxylem cells and interfascicular fibers of non-elongating internodes and developing secondary xylem of roots.

The protein resides in the nucleus. Functionally, transcriptional activator that plays a regulatory role in the development of secondary cell wall fibers. Is a direct target of SND1. The polypeptide is NAC domain-containing protein 10 (Arabidopsis thaliana (Mouse-ear cress)).